The primary structure comprises 258 residues: MMGVLEDQVIIVTGAASGIGMATAIAALREGARVFGVDIAPQPATLKENNKFRYAQCDLAVESSIDSVVSNCLEVFEGRIDALFNIAGVMDHHGSVDTVTDSDWDRCIAINLTAPLKLMRAVIPTMRAHKRGNIINMSSRAGVSGAAAGVAYTASKHGLIGLSKNVAWRFKGDNIRCNVVCPGGVATGIISNMDPSQFDHEALDTIKPILGAVYSNRPEGYTQMLPEEVAETVIFLASDQSARINGAVLPVDDAWSTI.

Residues V12, D58, and R120 each contribute to the NADP(+) site. Residue S138 is the Proton donor of the active site. Residues Y152, K156, and V185 each coordinate NADP(+). The Proton acceptor role is filled by Y152. K156 serves as the catalytic Lowers pKa of active site Tyr.

The protein belongs to the short-chain dehydrogenases/reductases (SDR) family.

It functions in the pathway secondary metabolite biosynthesis; terpenoid biosynthesis. In terms of biological role, short-chain dehydrogenase/reductase; part of the gene cluster that mediates the biosynthesis of 15-deoxyoxalicine B. The first step of the pathway is the synthesis of nicotinyl-CoA from nicotinic acid by the nicotinic acid-CoA ligase olcI. Nicotinyl-CoA is then a substrate of polyketide synthase olcA to produce 4-hydroxy-6-(3-pyridinyl)-2H-pyran-2-one (HPPO) which is further prenylated by the polyprenyl transferase olcH to yield geranylgeranyl-HPPO. Geranylgeranyl pyrophosphate is provided by the cluster-specific geranylgeranyl pyrophosphate synthase olcC. The FAD-dependent monooxygenase olcE catalyzes the epoxidation of geranylgeranyl-HPPO and the terpene cyclase olcD catalyzes the cyclization of the terpenoid component, resulting in the formation of the tricyclic terpene moiety seen in predecaturin E. The cytochrome P450 monooxygenase then catalyzes the allylic oxidation of predecaturin E, which is followed by spirocylization with concomitant loss of one molecule of water to form decaturin E. Decaturin E is the substrate of the cytochrome P450 monooxygenase olcJ which hydroxylates it at the C-29 position to form decaturin F. The short-chain dehydrogenase/reductase olcF may catalyze the oxidation of decaturin F to generate the 29-hydroxyl-27-one intermediate, and subsequent hemiacetal formation probably leads to the formation of decaturin C. The dioxygenase olcK may be a peroxisomal enzyme that catalyzes the hydroxylation of decaturin C into decaturin A once decaturin C is shuttled into the peroxisome by the MFS transporter olcL. Finally the cytochrome P450 monooxygenase olcB catalyzes the oxidative rearrangement to yield 15-deoxyoxalicine B. In the absence of olcJ, decaturin E may be shunted to a pathway in which it is oxidized to a ketone, possibly by olcF, to form decaturin D, which undergoes further allylic oxidation to yield decaturin G. Moreover, in the absence of oclK or oclL, oclB can convert decaturin C into 15-deoxyoxalicine A. This is Short-chain dehydrogenase/reductase olcF from Penicillium canescens.